The primary structure comprises 245 residues: MSDPSVYDETAIEAYDLVSSMLSPGAGLVAWVSSHRPLDGRTVLDLGCGTGVSSFALAEAGARVVAVDASRPSLDMLEKKRLDRDVEAVEGDFRDLTFDSTFDVVTMSRNTFFLAQEQEEKIALLRGIARHLKPGGAAFLDCTDPAEFQRAGGDARSVTYPLGRDRMVTVTQTADRAGQQILSIFLVQGATTLTAFHEQATWATLAEIRLMARIAGLEVTGVDGSYAGEPYTARSREMLVVLERQ.

Belongs to the methyltransferase superfamily.

The catalysed reaction is N-terminal L-alanyl-[cypemycin] + 2 S-adenosyl-L-methionine = N-terminal N,N-dimethyl-L-alanyl-[cypemycin] + 2 S-adenosyl-L-homocysteine + 3 H(+). Functionally, involved in the biosynthesis of the lanaridin cypemycin. The enzyme can methylate a variety of oligopeptides, cyclic peptides and the epsilon-amino group of lysine. In Streptomyces sp, this protein is Cypemycin N-terminal methyltransferase.